The primary structure comprises 204 residues: Rho GDP-dissociation inhibitor 1 (204 aa).

A disordered region spans residues 1–36 (MAEQEPTAEQLAQIAAENEEDEHSVNYKPPAQKSIQ). At Ala2 the chain carries N-acetylalanine. Ser34 is modified (phosphoserine). An N6-acetyllysine modification is found at Lys43. The residue at position 47 (Ser47) is a Phosphoserine. Lys105 and Lys127 each carry N6-acetyllysine. Residues Lys138 and Lys141 each participate in a glycyl lysine isopeptide (Lys-Gly) (interchain with G-Cter in SUMO1); alternate cross-link. Glycyl lysine isopeptide (Lys-Gly) (interchain with G-Cter in SUMO2); alternate cross-links involve residues Lys138 and Lys141. Position 141 is an N6-acetyllysine; alternate (Lys141). The residue at position 141 (Lys141) is an N6-succinyllysine; alternate. The residue at position 178 (Lys178) is an N6-acetyllysine.

This sequence belongs to the Rho GDI family. Monomer. Interacts with FER. Interacts with PLXNB3. Forms a heterodimer with RAC1. Interacts with RHOA, the affinity is increased by three orders of magnitude when RHOA is prenylated. Interacts with PSMD10; the interaction increases ARHGDIA association with RHOA, leading to ARHGDIA-mediated inactivation of RHOA and ROCK and prolonged AKT activation. Interacts with KANK2; the interaction is direct and may regulate the interaction of ARHGDIA with RHOA, RAC1 and CDC42. Interacts with RHOC. Interacts with CDC42. Interacts with NGFR (via death domain); NGFR binding decreases the affinity for RHOA. In kidney glomerulus, expressed in podocytes and mesangial cells.

It is found in the cytoplasm. Its function is as follows. Controls Rho proteins homeostasis. Regulates the GDP/GTP exchange reaction of the Rho proteins by inhibiting the dissociation of GDP from them, and the subsequent binding of GTP to them. Retains Rho proteins such as CDC42, RAC1 and RHOA in an inactive cytosolic pool, regulating their stability and protecting them from degradation. Actively involved in the recycling and distribution of activated Rho GTPases in the cell, mediates extraction from membranes of both inactive and activated molecules due its exceptionally high affinity for prenylated forms. Through the modulation of Rho proteins, may play a role in cell motility regulation. In glioma cells, inhibits cell migration and invasion by mediating the signals of SEMA5A and PLXNB3 that lead to inactivation of RAC1. This chain is Rho GDP-dissociation inhibitor 1 (Arhgdia), found in Mus musculus (Mouse).